A 221-amino-acid polypeptide reads, in one-letter code: Oligoribonuclease (221 aa).

Residues 21–186 (LVWVDLEMTG…ADIVESIREL (166 aa)) enclose the Exonuclease domain. The active site involves Tyr-143.

The protein belongs to the oligoribonuclease family.

The protein resides in the cytoplasm. Its function is as follows. 3'-to-5' exoribonuclease specific for small oligoribonucleotides. The chain is Oligoribonuclease from Corynebacterium efficiens (strain DSM 44549 / YS-314 / AJ 12310 / JCM 11189 / NBRC 100395).